The primary structure comprises 154 residues: Large ribosomal subunit protein uL13 (154 aa).

The protein belongs to the universal ribosomal protein uL13 family. Part of the 50S ribosomal subunit.

Its function is as follows. This protein is one of the early assembly proteins of the 50S ribosomal subunit, although it is not seen to bind rRNA by itself. It is important during the early stages of 50S assembly. In Rhodospirillum centenum (strain ATCC 51521 / SW), this protein is Large ribosomal subunit protein uL13.